The chain runs to 1418 residues: Chromatin remodeling factor mit1 (1418 aa).

Positions D135 to D148 are enriched in low complexity. The interval D135–K156 is disordered. The PHD-type zinc-finger motif lies at V212–N271. The RING-type; atypical zinc-finger motif lies at C215–S269. The region spanning Y568–M738 is the Helicase ATP-binding domain. An ATP-binding site is contributed by D581 to T588. The 160-residue stretch at I875–E1034 folds into the Helicase C-terminal domain.

This sequence belongs to the SNF2/RAD54 helicase family. As to quaternary structure, interacts with clr3.

It localises to the nucleus. Its subcellular location is the chromosome. It is found in the centromere. The protein resides in the telomere. Functionally, required for proper positioning of nucleosomes at heterochromatic loci and for transcriptional gene silencing (TGS) function of the Snf2/Hdac-containing repressor complex (SHREC). In Schizosaccharomyces pombe (strain 972 / ATCC 24843) (Fission yeast), this protein is Chromatin remodeling factor mit1 (mit1).